The following is a 140-amino-acid chain: 3-hydroxyacyl-[acyl-carrier-protein] dehydratase FabZ (140 aa).

H48 is a catalytic residue.

It belongs to the thioester dehydratase family. FabZ subfamily.

Its subcellular location is the cytoplasm. The catalysed reaction is a (3R)-hydroxyacyl-[ACP] = a (2E)-enoyl-[ACP] + H2O. Functionally, involved in unsaturated fatty acids biosynthesis. Catalyzes the dehydration of short chain beta-hydroxyacyl-ACPs and long chain saturated and unsaturated beta-hydroxyacyl-ACPs. This Pelotomaculum thermopropionicum (strain DSM 13744 / JCM 10971 / SI) protein is 3-hydroxyacyl-[acyl-carrier-protein] dehydratase FabZ.